The sequence spans 132 residues: Large ribosomal subunit protein bL12 (132 aa).

It belongs to the bacterial ribosomal protein bL12 family. In terms of assembly, homodimer. Part of the ribosomal stalk of the 50S ribosomal subunit. Forms a multimeric L10(L12)X complex, where L10 forms an elongated spine to which 2 to 4 L12 dimers bind in a sequential fashion. Binds GTP-bound translation factors.

In terms of biological role, forms part of the ribosomal stalk which helps the ribosome interact with GTP-bound translation factors. Is thus essential for accurate translation. The protein is Large ribosomal subunit protein bL12 of Chloroflexus aurantiacus (strain ATCC 29366 / DSM 635 / J-10-fl).